Consider the following 90-residue polypeptide: Large ribosomal subunit protein bL27 (90 aa).

The interval 1-22 (MAHKKSGGSSSNGRDSAGRRLG) is disordered.

Belongs to the bacterial ribosomal protein bL27 family.

This chain is Large ribosomal subunit protein bL27, found in Caulobacter sp. (strain K31).